The following is a 294-amino-acid chain: MVVLDGKKLSQEIKAELKTKVEQYKQEIQKVPGLTVIIVGEDPASQVYVRNKAKSCNEIGMASEVIELPASTSQEELLKKIADLNHNPNVHGILVQQPLPKHIDEFAVTLAIAPEKDVDGFHPENVGRLVLGHLDKCFVSCTPFGIIEILKRYNIETKGKHCVIVGRSNIVGKPMANLMVQKLAYMNCTVTVCHSATPDIATYTKQADILIAAIGKARFITGDMIKAGAVVIDVGINRIEATNTKSGYRLVGDVDFEAASQKASAITPVPGGVGPMTISMLLANTMKSFEHFLA.

NADP(+) contacts are provided by residues 166–168 (GRS), serine 195, and isoleucine 236.

It belongs to the tetrahydrofolate dehydrogenase/cyclohydrolase family. In terms of assembly, homodimer.

The catalysed reaction is (6R)-5,10-methylene-5,6,7,8-tetrahydrofolate + NADP(+) = (6R)-5,10-methenyltetrahydrofolate + NADPH. It carries out the reaction (6R)-5,10-methenyltetrahydrofolate + H2O = (6R)-10-formyltetrahydrofolate + H(+). The protein operates within one-carbon metabolism; tetrahydrofolate interconversion. Catalyzes the oxidation of 5,10-methylenetetrahydrofolate to 5,10-methenyltetrahydrofolate and then the hydrolysis of 5,10-methenyltetrahydrofolate to 10-formyltetrahydrofolate. The chain is Bifunctional protein FolD from Chloroherpeton thalassium (strain ATCC 35110 / GB-78).